The chain runs to 99 residues: Nucleoid-associated protein SpyM3_1606 (99 aa).

The protein belongs to the YbaB/EbfC family. As to quaternary structure, homodimer.

The protein resides in the cytoplasm. It localises to the nucleoid. Functionally, binds to DNA and alters its conformation. May be involved in regulation of gene expression, nucleoid organization and DNA protection. This Streptococcus pyogenes serotype M3 (strain ATCC BAA-595 / MGAS315) protein is Nucleoid-associated protein SpyM3_1606.